A 425-amino-acid chain; its full sequence is UDP-N-acetyl-D-glucosamine 6-dehydrogenase (425 aa).

NAD(+)-binding residues include Val-17, Asp-35, Arg-40, Thr-86, and Thr-121. The Nucleophile role is filled by Cys-261. Residue Arg-332 participates in NAD(+) binding.

It belongs to the UDP-glucose/GDP-mannose dehydrogenase family. As to quaternary structure, homotrimer.

The catalysed reaction is UDP-N-acetyl-alpha-D-glucosamine + 2 NAD(+) + H2O = UDP-2-acetamido-2-deoxy-alpha-D-glucuronate + 2 NADH + 3 H(+). The protein operates within capsule biogenesis; capsule polysaccharide biosynthesis. It participates in glycan metabolism; Vi-antigen biosynthesis. Its function is as follows. Dehydrogenase required for the biosynthesis of the capsular polysaccharide, commonly referred as the Vi antigen, an important virulence factor. Catalyzes the conversion of UDP-N-acetylglucosamine (UDP-GlcNAc) to UDP-N-acetylglucosaminuronic acid (UDP-GlcNAcA). Cannot use UDP-GalNAc, UDP-Glc and UDP-Gal as substrates. The polypeptide is UDP-N-acetyl-D-glucosamine 6-dehydrogenase (Salmonella typhi).